A 459-amino-acid polypeptide reads, in one-letter code: Mitochondrial distribution and morphology protein 10 (459 aa).

This sequence belongs to the MDM10 family. In terms of assembly, component of the ER-mitochondria encounter structure (ERMES) or MDM complex, composed of mmm1, mdm10, mdm12 and mdm34. Associates with the mitochondrial outer membrane sorting assembly machinery SAM(core) complex.

It is found in the mitochondrion outer membrane. Its function is as follows. Component of the ERMES/MDM complex, which serves as a molecular tether to connect the endoplasmic reticulum and mitochondria. Components of this complex are involved in the control of mitochondrial shape and protein biogenesis and may function in phospholipid exchange. mdm10 is involved in the late assembly steps of the general translocase of the mitochondrial outer membrane (TOM complex). Functions in the tom40-specific route of the assembly of outer membrane beta-barrel proteins, including the association of tom40 with the receptor tom22 and small TOM proteins. Can associate with the SAM(core) complex as well as the mdm12-mmm1 complex, both involved in late steps of the major beta-barrel assembly pathway, that is responsible for biogenesis of all outer membrane beta-barrel proteins. May act as a switch that shuttles between both complexes and channels precursor proteins into the tom40-specific pathway. Plays a role in mitochondrial morphology and in the inheritance of mitochondria. This chain is Mitochondrial distribution and morphology protein 10 (mdmB), found in Aspergillus terreus (strain NIH 2624 / FGSC A1156).